Reading from the N-terminus, the 578-residue chain is Endonuclease GajA (578 aa).

An ATPase domain region spans residues 1-341 (MKFSNITIKN…RLIRVHSTEK (341 aa)). Residue 32–36 (DIGKT) coordinates ATP. The toprim domain stretch occupies residues 370–510 (LFAERVLLIE…LGERIYLSEI (141 aa)). Positions 379, 383, 463, 464, and 513 each coordinate a divalent metal cation.

In terms of assembly, homotetramer. Forms the core of the anti-phage defense complex. Interacts with GajB; 2 GajB dimers dock at opposite sides of the GajA complex to form a 4:4 GajA-GajB assembly (GajAB). GajAB interacts with Bacillus phage Phi3T Gad1 protein; this interaction forms a 4:4:8 GajAB-Gad1 complex and leads to GajAB inhibition. Mg(2+) serves as cofactor. Mn(2+) is required as a cofactor.

Endonuclease activity inhibited by all NTPs, dNTPs, NDPs (at 0.5 mM, UDP not tested) and AMP-PNP; not inhibited by any tested NMP, dNMP or nucleoside. Inhibited by 100 mM NaCl, 100 mM KCl, 0.5 mM Co(2+) and 0.5 mM Ni(2+). Functionally, component of antiviral defense system Gabija type I, composed of GajA and GajB. Endonuclease that nicks double-stranded DNA within the sequence 5'-TNNNCGGGNNA-3' in the absence of nucleotides (NTP, dNTP and NDPs), cleaving after C-1. Has no detected ATPase activity. Expression of Gabija type I in B.subtilis (strain BEST7003) confers resistance to phages phi105, phi29, rho14, SpBeta and SBSphiC. Expression of Gabija type I in E.coli B (strain ATCC 11303) confers resistance to phage T7. It is thought that this enzyme is strongly suppressed during physiological growth (in E.coli total nucleotide concentration is over 8.7 mM in mid-log phase), but during viral replication, when nucleotides are rapidly consumed, it is de-suppressed and degrades target DNA. The chain is Endonuclease GajA from Bacillus cereus (strain VD045).